The following is a 687-amino-acid chain: T-box transcription factor TBX2b (687 aa).

A DNA-binding region (T-box) is located at residues 103 to 276 (LWDQFHKLGT…NNPFAKGFRD (174 aa)). Disordered regions lie at residues 303-452 (DRDG…ESPS) and 611-687 (NLLT…DSPK). Composition is skewed to basic and acidic residues over residues 338 to 357 (GSRD…HQND), 375 to 400 (SRSE…RKTS), and 408 to 430 (NLEK…KDTE). Composition is skewed to polar residues over residues 431–451 (NSGI…TESP), 611–630 (NLLT…SSKC), and 644–654 (GASQRNGSPKT). Residues 654–681 (TTMKESINELQNIQRLVSGLESQRETSS) are a coiled coil. Positions 675–687 (SQRETSSPRDSPK) are enriched in basic and acidic residues.

Binds DNA as a monomer. As to expression, expressed in the axial mesoderm, notably, in the notochordal precursor cells immediately before formation of the notochord and in the chordoneural hinge of the tail bud, after the notochord is formed. In addition, its expression is detected in the ventral forebrain, sensory neurons, fin buds and excretory system.

The protein resides in the nucleus. Functionally, transcription factor which acts as a transcriptional repressor. May also function as a transcriptional activator. Binds to the palindromic T site 5'-TTCACACCTAGGTGTGAA-3' DNA sequence, or a half-site, which are present in the regulatory region of several genes. Involved in the transcriptional regulation of genes required for mesoderm differentiation. Plays a role in the specification of late notochordal precursor cells and formation of the differentiated notochord. Required for cardiac atrioventricular canal formation. This Danio rerio (Zebrafish) protein is T-box transcription factor TBX2b (tbx2b).